A 36-amino-acid polypeptide reads, in one-letter code: Conotoxin Cl14.10 (36 aa).

A propeptide spanning residues 1 to 2 (NE) is cleaved from the precursor.

Post-translationally, contains 2 disulfide bond. In terms of tissue distribution, expressed by the venom duct.

It is found in the secreted. In Californiconus californicus (California cone), this protein is Conotoxin Cl14.10.